Reading from the N-terminus, the 621-residue chain is Glutamyl-tRNA(Gln) amidotransferase subunit E (621 aa).

The protein belongs to the GatB/GatE family. GatE subfamily. Heterodimer of GatD and GatE.

It carries out the reaction L-glutamyl-tRNA(Gln) + L-glutamine + ATP + H2O = L-glutaminyl-tRNA(Gln) + L-glutamate + ADP + phosphate + H(+). Allows the formation of correctly charged Gln-tRNA(Gln) through the transamidation of misacylated Glu-tRNA(Gln) in organisms which lack glutaminyl-tRNA synthetase. The reaction takes place in the presence of glutamine and ATP through an activated gamma-phospho-Glu-tRNA(Gln). The GatDE system is specific for glutamate and does not act on aspartate. The polypeptide is Glutamyl-tRNA(Gln) amidotransferase subunit E (Methanobrevibacter smithii (strain ATCC 35061 / DSM 861 / OCM 144 / PS)).